We begin with the raw amino-acid sequence, 600 residues long: Glutamine--fructose-6-phosphate aminotransferase [isomerizing] (600 aa).

Catalysis depends on Cys2, which acts as the Nucleophile; for GATase activity. Residues 2–217 (CGIVGFIGEQ…DKEIVIVTKE (216 aa)) form the Glutamine amidotransferase type-2 domain. SIS domains are found at residues 283 to 422 (IRNA…AKGE) and 452 to 590 (LAKQ…VDKP). Lys595 acts as the For Fru-6P isomerization activity in catalysis.

As to quaternary structure, homodimer.

Its subcellular location is the cytoplasm. The catalysed reaction is D-fructose 6-phosphate + L-glutamine = D-glucosamine 6-phosphate + L-glutamate. Its function is as follows. Catalyzes the first step in hexosamine metabolism, converting fructose-6P into glucosamine-6P using glutamine as a nitrogen source. This is Glutamine--fructose-6-phosphate aminotransferase [isomerizing] from Bacillus cereus (strain ATCC 14579 / DSM 31 / CCUG 7414 / JCM 2152 / NBRC 15305 / NCIMB 9373 / NCTC 2599 / NRRL B-3711).